The following is a 266-amino-acid chain: uncharacterized protein (266 aa).

4 helical membrane-spanning segments follow: residues 9-29 (IFII…IELP), 79-99 (GIMT…INPF), 122-142 (LSVM…MLSG), and 193-213 (GWYL…MVFI).

The protein localises to the membrane. This is an uncharacterized protein from Dictyostelium discoideum (Social amoeba).